A 359-amino-acid chain; its full sequence is Probable D-xylulose reductase A (359 aa).

Positions 47, 72, and 73 each coordinate Zn(2+). 182–187 (GAGPVG) is a binding site for NAD(+).

It belongs to the zinc-containing alcohol dehydrogenase family. Requires Zn(2+) as cofactor.

It catalyses the reaction xylitol + NAD(+) = D-xylulose + NADH + H(+). It participates in carbohydrate degradation; L-arabinose degradation via L-arabinitol; D-xylulose 5-phosphate from L-arabinose (fungal route): step 4/5. Its function is as follows. Xylitol dehydrogenase which catalyzes the conversion of xylitol to D-xylulose. Xylose is a major component of hemicelluloses such as xylan. Most fungi utilize D-xylose via three enzymatic reactions, xylose reductase (XR), xylitol dehydrogenase (XDH), and xylulokinase, to form xylulose 5-phosphate, which enters pentose phosphate pathway. In Emericella nidulans (strain FGSC A4 / ATCC 38163 / CBS 112.46 / NRRL 194 / M139) (Aspergillus nidulans), this protein is Probable D-xylulose reductase A (xdhA).